The following is a 375-amino-acid chain: Carboxypeptidase O (375 aa).

A signal peptide spans 1-20; sequence MKPLLGTFYLLGMLVPGWLG. The region spanning 50 to 345 is the Peptidase M14 domain; that stretch reads RYHPMGEIYQ…EAVLSVLDDV (296 aa). Residues histidine 109 and glutamate 112 each contribute to the Zn(2+) site. Asparagine 175 carries an N-linked (GlcNAc...) asparagine glycan. Residue histidine 237 participates in Zn(2+) binding. A glycan (N-linked (GlcNAc...) asparagine) is linked at asparagine 252. The Proton donor/acceptor role is filled by glutamate 311. Residue asparagine 315 is glycosylated (N-linked (GlcNAc...) asparagine). Serine 354 carries the GPI-anchor amidated serine lipid modification. Positions 355-375 are cleaved as a propeptide — removed in mature form; the sequence is ARKAKSTALVLGLLMSFMSLL.

It belongs to the peptidase M14 family. Zn(2+) is required as a cofactor.

Its subcellular location is the apical cell membrane. In terms of biological role, carboxypeptidase which preferentially cleaves C-terminal acidic residues from peptides and proteins. Can also cleave C-terminal hydrophobic amino acids, with a preference for small residues over large residues. The sequence is that of Carboxypeptidase O from Bos taurus (Bovine).